A 185-amino-acid polypeptide reads, in one-letter code: ATP synthase subunit delta (185 aa).

The protein belongs to the ATPase delta chain family. In terms of assembly, F-type ATPases have 2 components, F(1) - the catalytic core - and F(0) - the membrane proton channel. F(1) has five subunits: alpha(3), beta(3), gamma(1), delta(1), epsilon(1). CF(0) has four main subunits: a(1), b(1), b'(1) and c(10-14). The alpha and beta chains form an alternating ring which encloses part of the gamma chain. F(1) is attached to F(0) by a central stalk formed by the gamma and epsilon chains, while a peripheral stalk is formed by the delta, b and b' chains.

The protein localises to the cellular thylakoid membrane. In terms of biological role, f(1)F(0) ATP synthase produces ATP from ADP in the presence of a proton or sodium gradient. F-type ATPases consist of two structural domains, F(1) containing the extramembraneous catalytic core and F(0) containing the membrane proton channel, linked together by a central stalk and a peripheral stalk. During catalysis, ATP synthesis in the catalytic domain of F(1) is coupled via a rotary mechanism of the central stalk subunits to proton translocation. Its function is as follows. This protein is part of the stalk that links CF(0) to CF(1). It either transmits conformational changes from CF(0) to CF(1) or is implicated in proton conduction. In Crocosphaera subtropica (strain ATCC 51142 / BH68) (Cyanothece sp. (strain ATCC 51142)), this protein is ATP synthase subunit delta.